The chain runs to 120 residues: NAD(P)H-quinone oxidoreductase subunit 3 (120 aa).

3 helical membrane passes run 7 to 27, 64 to 84, and 89 to 109; these read YEYF…SLTA, MFAL…PWAV, and LGLL…VALV.

This sequence belongs to the complex I subunit 3 family. As to quaternary structure, NDH-1 can be composed of about 15 different subunits; different subcomplexes with different compositions have been identified which probably have different functions.

It localises to the cellular thylakoid membrane. The catalysed reaction is a plastoquinone + NADH + (n+1) H(+)(in) = a plastoquinol + NAD(+) + n H(+)(out). It carries out the reaction a plastoquinone + NADPH + (n+1) H(+)(in) = a plastoquinol + NADP(+) + n H(+)(out). Functionally, NDH-1 shuttles electrons from an unknown electron donor, via FMN and iron-sulfur (Fe-S) centers, to quinones in the respiratory and/or the photosynthetic chain. The immediate electron acceptor for the enzyme in this species is believed to be plastoquinone. Couples the redox reaction to proton translocation, and thus conserves the redox energy in a proton gradient. Cyanobacterial NDH-1 also plays a role in inorganic carbon-concentration. The polypeptide is NAD(P)H-quinone oxidoreductase subunit 3 (Microcystis aeruginosa (strain NIES-843 / IAM M-2473)).